A 244-amino-acid polypeptide reads, in one-letter code: Protein crossbronx (244 aa).

A UBC core domain is found at 20–176 (QQEYKILAEY…VQKNIKESKD (157 aa)).

The protein belongs to the ubiquitin-conjugating enzyme family. FTS subfamily.

The chain is Protein crossbronx (cbx) from Drosophila yakuba (Fruit fly).